Here is a 344-residue protein sequence, read N- to C-terminus: Oxygen sensor histidine kinase NreB (344 aa).

[4Fe-4S] cluster is bound by residues Cys-58, Cys-61, Cys-73, and Cys-76. The region spanning 152–344 (RISRELHDSV…GTNVTLNIPI (193 aa)) is the Histidine kinase domain. His-158 carries the post-translational modification Phosphohistidine; by autocatalysis.

[4Fe-4S] cluster is required as a cofactor. In terms of processing, autophosphorylated.

The protein resides in the cytoplasm. It catalyses the reaction ATP + protein L-histidine = ADP + protein N-phospho-L-histidine.. Its function is as follows. Member of the two-component regulatory system NreB/NreC involved in the control of dissimilatory nitrate/nitrite reduction in response to oxygen. NreB functions as a direct oxygen sensor histidine kinase which is autophosphorylated, in the absence of oxygen, probably at the conserved histidine residue, and transfers its phosphate group probably to a conserved aspartate residue of NreC. NreB/NreC activates the expression of the nitrate (narGHJI) and nitrite (nir) reductase operons, as well as the putative nitrate transporter gene narT. The chain is Oxygen sensor histidine kinase NreB (nreB) from Staphylococcus aureus (strain Mu3 / ATCC 700698).